Here is a 377-residue protein sequence, read N- to C-terminus: Molybdenum import ATP-binding protein ModC (377 aa).

Positions 4-240 constitute an ABC transporter domain; it reads IAPRSIRGEF…PALPLATARD (237 aa). 38-45 lines the ATP pocket; it reads GPSGCGKS. One can recognise a Mop domain in the interval 299–369; sequence RTSILNILPA…IKGVALAPER (71 aa).

This sequence belongs to the ABC transporter superfamily. Molybdate importer (TC 3.A.1.8) family. The complex is composed of two ATP-binding proteins (ModC), two transmembrane proteins (ModB) and a solute-binding protein (ModA).

It localises to the cell inner membrane. It carries out the reaction molybdate(out) + ATP + H2O = molybdate(in) + ADP + phosphate + H(+). In terms of biological role, part of the ABC transporter complex ModABC involved in molybdenum import. Responsible for energy coupling to the transport system. This is Molybdenum import ATP-binding protein ModC from Rhodopseudomonas palustris (strain HaA2).